The following is a 146-amino-acid chain: Large-conductance mechanosensitive channel (146 aa).

The next 3 membrane-spanning stretches (helical) occupy residues 21–41 (VGII…ADLI), 44–64 (IIGL…LGDG), and 83–103 (GSFI…FLLV).

This sequence belongs to the MscL family. In terms of assembly, homopentamer.

It localises to the cell inner membrane. Its function is as follows. Channel that opens in response to stretch forces in the membrane lipid bilayer. May participate in the regulation of osmotic pressure changes within the cell. The sequence is that of Large-conductance mechanosensitive channel from Cereibacter sphaeroides (strain ATCC 17023 / DSM 158 / JCM 6121 / CCUG 31486 / LMG 2827 / NBRC 12203 / NCIMB 8253 / ATH 2.4.1.) (Rhodobacter sphaeroides).